We begin with the raw amino-acid sequence, 216 residues long: Protein-L-isoaspartate O-methyltransferase (216 aa).

Residue Ser66 is part of the active site.

The protein belongs to the methyltransferase superfamily. L-isoaspartyl/D-aspartyl protein methyltransferase family.

The protein resides in the cytoplasm. It carries out the reaction [protein]-L-isoaspartate + S-adenosyl-L-methionine = [protein]-L-isoaspartate alpha-methyl ester + S-adenosyl-L-homocysteine. Its function is as follows. Catalyzes the methyl esterification of L-isoaspartyl residues in peptides and proteins that result from spontaneous decomposition of normal L-aspartyl and L-asparaginyl residues. It plays a role in the repair and/or degradation of damaged proteins. This Colwellia psychrerythraea (strain 34H / ATCC BAA-681) (Vibrio psychroerythus) protein is Protein-L-isoaspartate O-methyltransferase.